The following is a 173-amino-acid chain: CASP-like protein 2D1 (173 aa).

The Cytoplasmic segment spans residues 1–9; it reads MAPLLKLLD. Residues 10–29 form a helical membrane-spanning segment; that stretch reads SSLRVSVIPLSAATIWLTVT. Residues 30–50 lie on the Extracellular side of the membrane; that stretch reads NHQDNSSYGNLKYSNIMGLKY. N-linked (GlcNAc...) asparagine glycosylation occurs at N34. Residues 51-71 traverse the membrane as a helical segment; sequence MVCISAICASYAFVAAVSIWI. The Cytoplasmic segment spans residues 72–86; it reads KCLVNKVWLFFVSDQ. The helical transmembrane segment at 87–107 threads the bilayer; sequence IIAYLMVTSVAAAMEILYIAY. Topologically, residues 108–131 are extracellular; that stretch reads NGDQKVTWSEACTSYGKFCNGMKT. A helical membrane pass occupies residues 132–152; that stretch reads ALILHALTLCFFIVLAVISAY. Residues 153–173 lie on the Cytoplasmic side of the membrane; sequence RAFSMYQPPVSSKETVEGDAT.

It belongs to the Casparian strip membrane proteins (CASP) family. In terms of assembly, homodimer and heterodimers.

It localises to the cell membrane. This is CASP-like protein 2D1 from Ricinus communis (Castor bean).